Consider the following 316-residue polypeptide: uncharacterized protein (316 aa).

Disordered regions lie at residues 82–105 and 238–257; these read AMAAASTGAGSSSGTNVGGSSGGN and ASVSVQTTQQSRQQSTDTQE. 2 stretches are compositionally biased toward low complexity: residues 84–96 and 239–255; these read AAASTGAGSSSGT and SVSVQTTQQSRQQSTDT.

Belongs to the MG307/MG309/MG338 family.

This is an uncharacterized protein from Mycoplasma pneumoniae (strain ATCC 29342 / M129 / Subtype 1) (Mycoplasmoides pneumoniae).